Consider the following 146-residue polypeptide: Probable calcium-binding protein CML32 (146 aa).

4 consecutive EF-hand domains span residues 1–33 (MSVAEIFERVDKNKDGKISWDEFAEAIRAFSPS), 34–69 (ITSEEIDNMFREIDVDGDNQIDVAEYASCLMLGGEG), 73–108 (DEDIVMKEAFDLYDIDGDGKISASEIHVVLKRLGEK), and 109–144 (QTIAECIAMVRAVDADGDGFVSFEEFKTMMSCNNKK). Residues Asp-11, Asn-13, Asp-15, Lys-17, Glu-22, Asp-47, Asp-49, Asp-51, Gln-53, Glu-58, Asp-86, Asp-88, Asp-90, Lys-92, Glu-97, Asp-122, Asp-124, Asp-126, and Glu-133 each coordinate Ca(2+).

In terms of biological role, potential calcium sensor. In Arabidopsis thaliana (Mouse-ear cress), this protein is Probable calcium-binding protein CML32 (CML32).